A 135-amino-acid chain; its full sequence is Immunity protein RhsIA (135 aa).

The tract at residues R58 to D77 is disordered.

In terms of biological role, immunity component of a toxin-immunity protein module, which functions as a cellular contact-dependent growth inhibition (CDI) system. Specifically inhibits its cognate toxin RhsA. Cell contact is necessary for growth inhibition. The protein is Immunity protein RhsIA (rhsIA) of Dickeya dadantii (strain 3937) (Erwinia chrysanthemi (strain 3937)).